A 111-amino-acid chain; its full sequence is Putative ciliary rootlet coiled-coil protein-like 1 protein (111 aa).

The stretch at 21–86 (MELELSVTKL…RQAEQEATVA (66 aa)) forms a coiled coil.

The protein belongs to the rootletin family.

The sequence is that of Putative ciliary rootlet coiled-coil protein-like 1 protein (CROCCP2) from Homo sapiens (Human).